We begin with the raw amino-acid sequence, 541 residues long: Multidrug transporter protein MdtP (541 aa).

The next 14 membrane-spanning stretches (helical) occupy residues 14–34, 40–60, 79–99, 112–132, 141–161, 168–188, 201–221, 229–249, 273–293, 307–327, 329–349, 359–379, 401–420, and 492–512; these read LLIT…TIVG, IVGD…YLLT, IVYV…GMAN, GIGG…LFTG, VFGA…GWIV, WVFY…ARGL, IAGI…LSFG, SWQI…FIIV, LIGF…PFFM, IMTP…QLVY, IGIK…FLLL, LVAT…MPIL, FFRS…VMNA, and LHSV…FTLF.

It belongs to the major facilitator superfamily. EmrB family.

It is found in the cell membrane. In terms of biological role, multidrug efflux transporter. Contributes to resistance to several antibiotics, including fusidic acid, novobiocin, streptomycin and actinomycin, possibly by pumping these structurally unrelated antibiotics out of cells. This Bacillus subtilis (strain 168) protein is Multidrug transporter protein MdtP.